Here is a 170-residue protein sequence, read N- to C-terminus: Cytochrome c-type biogenesis protein CcmE (170 aa).

Over 1 to 7 (MTRKQRR) the chain is Cytoplasmic. The helical; Signal-anchor for type II membrane protein transmembrane segment at 8–28 (LTIIGGALFVLAVAAGLVLNA) threads the bilayer. The Periplasmic segment spans residues 29–170 (LRDSIVFFST…GEKTAAGATQ (142 aa)). Residues histidine 122 and tyrosine 126 each coordinate heme. Residues 137–146 (KQGHWKDDYG) are compositionally biased toward basic and acidic residues. The interval 137–170 (KQGHWKDDYGKPQAAKPGPVSMREGEKTAAGATQ) is disordered.

This sequence belongs to the CcmE/CycJ family.

Its subcellular location is the cell inner membrane. Heme chaperone required for the biogenesis of c-type cytochromes. Transiently binds heme delivered by CcmC and transfers the heme to apo-cytochromes in a process facilitated by CcmF and CcmH. The chain is Cytochrome c-type biogenesis protein CcmE from Bradyrhizobium sp. (strain BTAi1 / ATCC BAA-1182).